Consider the following 112-residue polypeptide: Nucleoid-associated protein RER_03900 (112 aa).

The protein belongs to the YbaB/EbfC family. As to quaternary structure, homodimer.

Its subcellular location is the cytoplasm. It is found in the nucleoid. In terms of biological role, binds to DNA and alters its conformation. May be involved in regulation of gene expression, nucleoid organization and DNA protection. The polypeptide is Nucleoid-associated protein RER_03900 (Rhodococcus erythropolis (strain PR4 / NBRC 100887)).